A 110-amino-acid chain; its full sequence is Mite allergen Lep d 5 (110 aa).

Belongs to the mite group 5 allergen family.

This is Mite allergen Lep d 5 from Lepidoglyphus destructor (Storage mite).